The following is a 203-amino-acid chain: Probable Tat proofreading chaperone DmsD (203 aa).

Belongs to the TorD/DmsD family. DmsD subfamily.

Functionally, required for biogenesis/assembly of DMSO reductase, but not for the interaction of the DmsA signal peptide with the Tat system. May be part of a chaperone cascade complex that facilitates a folding-maturation pathway for the substrate protein. This chain is Probable Tat proofreading chaperone DmsD, found in Haemophilus influenzae (strain ATCC 51907 / DSM 11121 / KW20 / Rd).